Consider the following 180-residue polypeptide: ATP synthase subunit b (180 aa).

The chain crosses the membrane as a helical span at residues 15–35; that stretch reads LIPEVPELVIGLLAFAIVFFV.

The protein belongs to the ATPase B chain family. F-type ATPases have 2 components, F(1) - the catalytic core - and F(0) - the membrane proton channel. F(1) has five subunits: alpha(3), beta(3), gamma(1), delta(1), epsilon(1). F(0) has three main subunits: a(1), b(2) and c(10-14). The alpha and beta chains form an alternating ring which encloses part of the gamma chain. F(1) is attached to F(0) by a central stalk formed by the gamma and epsilon chains, while a peripheral stalk is formed by the delta and b chains.

The protein resides in the cell membrane. Functionally, f(1)F(0) ATP synthase produces ATP from ADP in the presence of a proton or sodium gradient. F-type ATPases consist of two structural domains, F(1) containing the extramembraneous catalytic core and F(0) containing the membrane proton channel, linked together by a central stalk and a peripheral stalk. During catalysis, ATP synthesis in the catalytic domain of F(1) is coupled via a rotary mechanism of the central stalk subunits to proton translocation. Its function is as follows. Component of the F(0) channel, it forms part of the peripheral stalk, linking F(1) to F(0). The sequence is that of ATP synthase subunit b from Streptomyces avermitilis (strain ATCC 31267 / DSM 46492 / JCM 5070 / NBRC 14893 / NCIMB 12804 / NRRL 8165 / MA-4680).